Consider the following 82-residue polypeptide: Small ribosomal subunit protein bS18 (82 aa).

This sequence belongs to the bacterial ribosomal protein bS18 family. In terms of assembly, part of the 30S ribosomal subunit. Forms a tight heterodimer with protein bS6.

Its function is as follows. Binds as a heterodimer with protein bS6 to the central domain of the 16S rRNA, where it helps stabilize the platform of the 30S subunit. This is Small ribosomal subunit protein bS18 from Chlamydia pneumoniae (Chlamydophila pneumoniae).